A 99-amino-acid chain; its full sequence is Aspartyl/glutamyl-tRNA(Asn/Gln) amidotransferase subunit C (99 aa).

The protein belongs to the GatC family. Heterotrimer of A, B and C subunits.

It carries out the reaction L-glutamyl-tRNA(Gln) + L-glutamine + ATP + H2O = L-glutaminyl-tRNA(Gln) + L-glutamate + ADP + phosphate + H(+). The enzyme catalyses L-aspartyl-tRNA(Asn) + L-glutamine + ATP + H2O = L-asparaginyl-tRNA(Asn) + L-glutamate + ADP + phosphate + 2 H(+). Its function is as follows. Allows the formation of correctly charged Asn-tRNA(Asn) or Gln-tRNA(Gln) through the transamidation of misacylated Asp-tRNA(Asn) or Glu-tRNA(Gln) in organisms which lack either or both of asparaginyl-tRNA or glutaminyl-tRNA synthetases. The reaction takes place in the presence of glutamine and ATP through an activated phospho-Asp-tRNA(Asn) or phospho-Glu-tRNA(Gln). The chain is Aspartyl/glutamyl-tRNA(Asn/Gln) amidotransferase subunit C from Kineococcus radiotolerans (strain ATCC BAA-149 / DSM 14245 / SRS30216).